The following is a 340-amino-acid chain: tRNA N6-adenosine threonylcarbamoyltransferase (340 aa).

Residues H111 and H115 each coordinate Fe cation. Substrate is bound by residues 134–138 (LVSGG), D167, G180, and N276. Residue D304 coordinates Fe cation.

Belongs to the KAE1 / TsaD family. Fe(2+) serves as cofactor.

It is found in the cytoplasm. It carries out the reaction L-threonylcarbamoyladenylate + adenosine(37) in tRNA = N(6)-L-threonylcarbamoyladenosine(37) in tRNA + AMP + H(+). Required for the formation of a threonylcarbamoyl group on adenosine at position 37 (t(6)A37) in tRNAs that read codons beginning with adenine. Is involved in the transfer of the threonylcarbamoyl moiety of threonylcarbamoyl-AMP (TC-AMP) to the N6 group of A37, together with TsaE and TsaB. TsaD likely plays a direct catalytic role in this reaction. The polypeptide is tRNA N6-adenosine threonylcarbamoyltransferase (Helicobacter pylori (strain Shi470)).